Consider the following 346-residue polypeptide: Dihydroorotase (346 aa).

Zn(2+) contacts are provided by His13 and His15. Substrate-binding positions include 15–17 and Asn41; that span reads HLR. Zn(2+) contacts are provided by Lys99, His136, and His174. Position 99 is an N6-carboxylysine (Lys99). Residue His136 coordinates substrate. Substrate is bound at residue Leu219. Asp247 provides a ligand contact to Zn(2+). Asp247 is an active-site residue. Substrate contacts are provided by His251 and Ala263.

It belongs to the metallo-dependent hydrolases superfamily. DHOase family. Class II DHOase subfamily. As to quaternary structure, homodimer. The cofactor is Zn(2+).

The enzyme catalyses (S)-dihydroorotate + H2O = N-carbamoyl-L-aspartate + H(+). The protein operates within pyrimidine metabolism; UMP biosynthesis via de novo pathway; (S)-dihydroorotate from bicarbonate: step 3/3. Catalyzes the reversible cyclization of carbamoyl aspartate to dihydroorotate. This is Dihydroorotase from Rhizobium leguminosarum bv. trifolii (strain WSM2304).